A 368-amino-acid polypeptide reads, in one-letter code: Microtubule-associated protein Jupiter (368 aa).

S30 carries the post-translational modification Phosphoserine. The residue at position 41 (T41) is a Phosphothreonine. The span at 81–93 shows a compositional bias: basic and acidic residues; the sequence is RRGQKSVDSHSRL. Positions 81-106 are disordered; the sequence is RRGQKSVDSHSRLFGEPSRPITPGKN. Phosphothreonine is present on T102. Phosphoserine occurs at positions 111, 146, and 157. Composition is skewed to low complexity over residues 129 to 157 and 238 to 248; these read NGNT…VSSS and GRYGYSSQSRR. 3 disordered regions span residues 129-164, 196-256, and 316-368; these read NGNT…LKIN, SQGN…SPLN, and KPKK…SGLW. The span at 337–354 shows a compositional bias: polar residues; that stretch reads GSDSAQTPTMNGANQVIN.

It belongs to the MAP Jupiter family.

The protein localises to the nucleus. The protein resides in the cytoplasm. It localises to the cytoskeleton. It is found in the spindle. Binds to all microtubule populations. This is Microtubule-associated protein Jupiter from Drosophila willistoni (Fruit fly).